We begin with the raw amino-acid sequence, 977 residues long: ATP-dependent RNA helicase DBP10 (977 aa).

Residues 1–121 (MGIISKRKRH…NSEKSKHKKG (121 aa)) form a disordered region. Residues 26 to 35 (ITSNIGLNTA) are compositionally biased toward polar residues. Over residues 37 to 61 (SSDESESSGDDEEEVQDIVDFSDEE) the composition is skewed to acidic residues. Polar residues predominate over residues 70–81 (SNKTLTDNNSFP). A Q motif motif is present at residues 121–149 (GSFPSFGFSKLILSNVHKKGFRQPTPIQR). Residues 152-324 (IPLILQKRDI…KAGLTNPVLV (173 aa)) enclose the Helicase ATP-binding domain. 165 to 172 (ARTGSGKT) lines the ATP pocket. A DEAD box motif is present at residues 272 to 275 (DEAD). Disordered regions lie at residues 377 to 403 (NKSLSDSDSEDEDNKGKQNSRKSKKGK) and 871 to 977 (KTGA…KRKF). Residues 394–403 (QNSRKSKKGK) are compositionally biased toward basic residues. The Helicase C-terminal domain occupies 403 to 554 (KFQKLKVSAS…SMYEASCKLM (152 aa)). Residues 878 to 894 (SIPTNLLSDPTTDSGSQ) are compositionally biased toward polar residues. Over residues 910–921 (RLPDKFRDDYQS) the composition is skewed to basic and acidic residues. A compositionally biased stretch (basic residues) spans 961–977 (KEKKRQKNARPTKKRKF).

This sequence belongs to the DEAD box helicase family. DDX54/DBP10 subfamily.

The protein localises to the nucleus. The protein resides in the nucleolus. The catalysed reaction is ATP + H2O = ADP + phosphate + H(+). Functionally, ATP-binding RNA helicase involved in the biogenesis of 60S ribosomal subunits and is required for the normal formation of 25S and 5.8S rRNAs. This is ATP-dependent RNA helicase DBP10 (DBP10) from Vanderwaltozyma polyspora (strain ATCC 22028 / DSM 70294 / BCRC 21397 / CBS 2163 / NBRC 10782 / NRRL Y-8283 / UCD 57-17) (Kluyveromyces polysporus).